We begin with the raw amino-acid sequence, 98 residues long: uncharacterized protein (98 aa).

This is an uncharacterized protein from Frog virus 3 (isolate Goorha) (FV-3).